We begin with the raw amino-acid sequence, 519 residues long: Transketolase, chloroplastic (519 aa).

Residue Asp-11 participates in Mg(2+) binding. Residues Gly-12 and Asn-41 each coordinate thiamine diphosphate. The Mg(2+) site is built by Asn-41 and Ile-43. Residue His-118 coordinates thiamine diphosphate. Substrate contacts are provided by His-118, Arg-212, and Ser-239. Residues Glu-266 and Phe-293 each contribute to the thiamine diphosphate site. The active-site Proton donor is the Glu-266. Substrate contacts are provided by His-317, Asp-325, and Arg-376.

This sequence belongs to the transketolase family. In terms of assembly, homodimer. Requires Mg(2+) as cofactor. Ca(2+) serves as cofactor. It depends on Mn(2+) as a cofactor. Co(2+) is required as a cofactor. The cofactor is thiamine diphosphate. In terms of tissue distribution, constitutively expressed in leaves and roots.

The protein resides in the plastid. Its subcellular location is the chloroplast. It carries out the reaction D-sedoheptulose 7-phosphate + D-glyceraldehyde 3-phosphate = aldehydo-D-ribose 5-phosphate + D-xylulose 5-phosphate. Its function is as follows. Catalyzes the transfer of a two-carbon ketol group from a ketose donor to an aldose acceptor, via a covalent intermediate with the cofactor thiamine pyrophosphate. In Craterostigma plantagineum (Blue gem), this protein is Transketolase, chloroplastic (TKT3).